Reading from the N-terminus, the 438-residue chain is Myosin light chain kinase, smooth muscle (438 aa).

Positions 1–241 (FRLVEKKTGK…CTQCLQHPWL (241 aa)) constitute a Protein kinase domain. Lys15 contributes to the ATP binding site. Tyr97 is modified (phosphotyrosine; by ABL1). The Proton acceptor role is filled by Asp107. Tyr157 is subject to Phosphotyrosine; by ABL1. The calmodulin-binding stretch occupies residues 233–296 (TQCLQHPWLX…SGLSGRKSST (64 aa)). Phosphoserine occurs at positions 281, 282, 294, 295, and 298. The segment at 283-438 (MAMISGLSGR…GEGGEEEEEE (156 aa)) is telokin. Positions 289–309 (LSGRKSSTGSPTSPLNAEKLE) are disordered. A compositionally biased stretch (polar residues) spans 292–303 (RKSSTGSPTSPL). Thr300 carries the post-translational modification Phosphothreonine. Ser301 bears the Phosphoserine mark. The region spanning 331-420 (PYFSKTIRDL…GEATCTAELI (90 aa)) is the Ig-like C2-type domain. Cys352 and Cys404 form a disulfide bridge.

This sequence belongs to the protein kinase superfamily. CAMK Ser/Thr protein kinase family. All isoforms including Telokin bind calmodulin. Interacts with SVIL. Interacts with CTTN; this interaction is reduced during thrombin-induced endothelial cell (EC) contraction but is promoted by the barrier-protective agonist sphingosine 1-phosphate (S1P) within lamellipodia. A complex made of ABL1, CTTN and MYLK regulates cortical actin-based cytoskeletal rearrangement critical to sphingosine 1-phosphate (S1P)-mediated endothelial cell (EC) barrier enhancement. Binds to NAA10/ARD1 and PTK2B/PYK2. Mg(2+) is required as a cofactor. It depends on Ca(2+) as a cofactor. Post-translationally, the C-terminus is deglutamylated by AGTPBP1/CCP1, AGBL1/CCP4 and AGBL4/CCP6, leading to the formation of Myosin light chain kinase, smooth muscle, deglutamylated form. The consequences of C-terminal deglutamylation are unknown. Can probably be down-regulated by phosphorylation. Tyrosine phosphorylation by ABL1 increases kinase activity, reverses MLCK-mediated inhibition of Arp2/3-mediated actin polymerization, and enhances CTTN-binding. Phosphorylation by SRC promotes CTTN binding.

Its subcellular location is the cytoplasm. The protein localises to the cell projection. It is found in the lamellipodium. The protein resides in the cleavage furrow. It localises to the cytoskeleton. Its subcellular location is the stress fiber. The enzyme catalyses L-seryl-[myosin light chain] + ATP = O-phospho-L-seryl-[myosin light chain] + ADP + H(+). It carries out the reaction L-threonyl-[myosin light chain] + ATP = O-phospho-L-threonyl-[myosin light chain] + ADP + H(+). Its function is as follows. Calcium/calmodulin-dependent myosin light chain kinase implicated in smooth muscle contraction via phosphorylation of myosin light chains (MLC). Also regulates actin-myosin interaction through a non-kinase activity. Phosphorylates PTK2B/PYK2 and myosin light-chains. Involved in the inflammatory response (e.g. apoptosis, vascular permeability, leukocyte diapedesis), cell motility and morphology, airway hyperreactivity and other activities relevant to asthma. Required for tonic airway smooth muscle contraction that is necessary for physiological and asthmatic airway resistance. Necessary for gastrointestinal motility. Implicated in the regulation of endothelial as well as vascular permeability, probably via the regulation of cytoskeletal rearrangements. In the nervous system it has been shown to control the growth initiation of astrocytic processes in culture and to participate in transmitter release at synapses formed between cultured sympathetic ganglion cells. Critical participant in signaling sequences that result in fibroblast apoptosis. Plays a role in the regulation of epithelial cell survival. Required for epithelial wound healing, especially during actomyosin ring contraction during purse-string wound closure. Mediates RhoA-dependent membrane blebbing. Triggers TRPC5 channel activity in a calcium-dependent signaling, by inducing its subcellular localization at the plasma membrane. Promotes cell migration (including tumor cells) and tumor metastasis. PTK2B/PYK2 activation by phosphorylation mediates ITGB2 activation and is thus essential to trigger neutrophil transmigration during acute lung injury (ALI). May regulate optic nerve head astrocyte migration. Probably involved in mitotic cytoskeletal regulation. Regulates tight junction probably by modulating ZO-1 exchange in the perijunctional actomyosin ring. Mediates burn-induced microvascular barrier injury; triggers endothelial contraction in the development of microvascular hyperpermeability by phosphorylating MLC. Essential for intestinal barrier dysfunction. Mediates Giardia spp.-mediated reduced epithelial barrier function during giardiasis intestinal infection via reorganization of cytoskeletal F-actin and tight junctional ZO-1. Necessary for hypotonicity-induced Ca(2+) entry and subsequent activation of volume-sensitive organic osmolyte/anion channels (VSOAC) in cervical cancer cells. This chain is Myosin light chain kinase, smooth muscle (MYLK), found in Ovis aries (Sheep).